An 85-amino-acid chain; its full sequence is Large ribosomal subunit protein bL27 (85 aa).

It belongs to the bacterial ribosomal protein bL27 family.

This is Large ribosomal subunit protein bL27 from Campylobacter hominis (strain ATCC BAA-381 / DSM 21671 / CCUG 45161 / LMG 19568 / NCTC 13146 / CH001A).